A 468-amino-acid polypeptide reads, in one-letter code: Transmembrane protein 151A (468 aa).

Positions 1-20 (MPEGEGGDCGEVPALVPDGE) are disordered. The next 2 helical transmembrane spans lie at 45-65 (CLLL…CRLA) and 98-118 (YLYI…AECW). The segment at 384-438 (VSSNSLPPARPSGPRLPFSRSRLSLGAGGRTTPGVFRSLSGGPLGRRGEDTEPLE) is disordered.

The protein belongs to the TMEM151 family. Highly expressed in the central nervous system (CNS) including the cerebral cortex, hippocampus, spinal cord, brainstem, and thalamus. Expression is relatively low during postnatal stages but highly expressed at postnatal day 14 (P14), and declined in adulthood. Also expressed in the stomach, heart, liver, spleen, lung, kidney, and muscle.

It is found in the endoplasmic reticulum membrane. It localises to the cell projection. The protein localises to the axon. The protein resides in the dendrite. The polypeptide is Transmembrane protein 151A (Tmem151a) (Mus musculus (Mouse)).